The primary structure comprises 314 residues: Vacuolar membrane protein SCRG_03194 (314 aa).

Residues K32 to A60 form a disordered region. Residues V93–L113 form a helical membrane-spanning segment. Residues S148, S254, and S274 each carry the phosphoserine modification. Positions E240–N309 are disordered. Basic and acidic residues predominate over residues S254–H269.

Belongs to the PRM5 family.

Its subcellular location is the vacuole membrane. This chain is Vacuolar membrane protein SCRG_03194, found in Saccharomyces cerevisiae (strain RM11-1a) (Baker's yeast).